The chain runs to 206 residues: MSNRSRRQVRLSRALGIALTPKAQRIFEKRPYAPGEHGRTRRRAESDYAVRLREKQRLRAQYGISEKQLRAAYEKGTHTAGQTGNAMLTDLETRLDALVLRAGIARTTAQARQFVVHRHILVDGNIVDRPSYRVKPGQTIQVKPKSQTMVPFQIAAEGTHRDVLPPVPGYLDVNLASLKATLTRKPEPEEIPVQVNIQYVVEFYAR.

One can recognise an S4 RNA-binding domain in the interval 93–153 (TRLDALVLRA…PKSQTMVPFQ (61 aa)).

Belongs to the universal ribosomal protein uS4 family. As to quaternary structure, part of the 30S ribosomal subunit. Contacts protein S5. The interaction surface between S4 and S5 is involved in control of translational fidelity.

Its function is as follows. One of the primary rRNA binding proteins, it binds directly to 16S rRNA where it nucleates assembly of the body of the 30S subunit. Functionally, with S5 and S12 plays an important role in translational accuracy. In Bifidobacterium animalis subsp. lactis (strain AD011), this protein is Small ribosomal subunit protein uS4.